The sequence spans 750 residues: Photosystem I P700 chlorophyll a apoprotein A1 (750 aa).

The next 8 helical transmembrane spans lie at 72 to 95 (VFSAHFGQLAVIFIWLSGMYFHGA), 158 to 181 (LYTTAIGGLIAAGLMFFAGWFHYH), 197 to 221 (MNHHLAGLLGLGSLSWAGHQIHVSL), 293 to 311 (TVHHHVAIAVLFIVAGHMY), 348 to 371 (WHAQLGLNLALMGSLSIIVAHHMY), 387 to 413 (LSLFTHHMWIGGFCIVGGAAHAAIFMV), 435 to 457 (AIISHLNWVCIFLGFHSFGLYIH), and 532 to 550 (FLVHHIHAFTIHVTVLILL). Positions 574 and 583 each coordinate [4Fe-4S] cluster. Transmembrane regions (helical) follow at residues 590–611 (HVFLGLFWMYNCLSIVIFHFSW) and 664–686 (LSAYGLMFLGAHFVWAFSLMFLF). His-675 is a binding site for chlorophyll a'. Chlorophyll a-binding residues include Met-683 and Tyr-691. Trp-692 serves as a coordination point for phylloquinone. Residues 724-744 (AVGVAHYLLGGIATTWAFFLA) form a helical membrane-spanning segment.

This sequence belongs to the PsaA/PsaB family. In terms of assembly, the PsaA/B heterodimer binds the P700 chlorophyll special pair and subsequent electron acceptors. PSI consists of a core antenna complex that captures photons, and an electron transfer chain that converts photonic excitation into a charge separation. The eukaryotic PSI reaction center is composed of at least 11 subunits. Requires P700 is a chlorophyll a/chlorophyll a' dimer, A0 is one or more chlorophyll a, A1 is one or both phylloquinones and FX is a shared 4Fe-4S iron-sulfur center. as cofactor.

The protein localises to the plastid. It localises to the chloroplast thylakoid membrane. It catalyses the reaction reduced [plastocyanin] + hnu + oxidized [2Fe-2S]-[ferredoxin] = oxidized [plastocyanin] + reduced [2Fe-2S]-[ferredoxin]. Its function is as follows. PsaA and PsaB bind P700, the primary electron donor of photosystem I (PSI), as well as the electron acceptors A0, A1 and FX. PSI is a plastocyanin-ferredoxin oxidoreductase, converting photonic excitation into a charge separation, which transfers an electron from the donor P700 chlorophyll pair to the spectroscopically characterized acceptors A0, A1, FX, FA and FB in turn. Oxidized P700 is reduced on the lumenal side of the thylakoid membrane by plastocyanin. This is Photosystem I P700 chlorophyll a apoprotein A1 from Mesostigma viride (Green alga).